The following is a 245-amino-acid chain: Phosphoadenosine 5'-phosphosulfate reductase (245 aa).

Cys-239 serves as the catalytic Nucleophile; cysteine thiosulfonate intermediate.

Belongs to the PAPS reductase family. CysH subfamily.

The protein resides in the cytoplasm. It catalyses the reaction [thioredoxin]-disulfide + sulfite + adenosine 3',5'-bisphosphate + 2 H(+) = [thioredoxin]-dithiol + 3'-phosphoadenylyl sulfate. It participates in sulfur metabolism; hydrogen sulfide biosynthesis; sulfite from sulfate: step 3/3. Its function is as follows. Catalyzes the formation of sulfite from phosphoadenosine 5'-phosphosulfate (PAPS) using thioredoxin as an electron donor. The protein is Phosphoadenosine 5'-phosphosulfate reductase of Baumannia cicadellinicola subsp. Homalodisca coagulata.